The chain runs to 146 residues: Hemoglobin subunit beta (146 aa).

The residue at position 1 (Val-1) is an N-acetylvaline. In terms of domain architecture, Globin spans 2 to 146 (HLTAEEKSLV…VANALAHKYH (145 aa)). Ser-44 bears the Phosphoserine mark. At Lys-59 the chain carries N6-acetyllysine. His-63 contributes to the heme b binding site. Position 82 is an N6-acetyllysine (Lys-82). His-92 contributes to the heme b binding site. S-nitrosocysteine is present on Cys-93. Lys-144 is modified (N6-acetyllysine).

Belongs to the globin family. As to quaternary structure, heterotetramer of two alpha chains and two beta chains. As to expression, red blood cells.

Its function is as follows. Involved in oxygen transport from the lung to the various peripheral tissues. The sequence is that of Hemoglobin subunit beta (HBB) from Canis latrans (Coyote).